A 1104-amino-acid polypeptide reads, in one-letter code: Translation initiation factor IF-2 (1104 aa).

2 disordered regions span residues 51–444 and 461–497; these read SLLG…LAAQ and LARP…RRRA. Composition is skewed to low complexity over residues 60 to 119 and 127 to 164; these read AKPA…KPQA and ATPK…AAKP. Over residues 189–202 the composition is skewed to pro residues; it reads APTPRPTPARPTPR. 4 stretches are compositionally biased toward low complexity: residues 203 to 215, 227 to 246, 311 to 336, and 366 to 396; these read PAGA…PTPG, GAPS…KPGA, STTG…PAGM, and PTKA…SFRP. A compositionally biased stretch (basic and acidic residues) spans 406-420; the sequence is GRPDWDDSARLDALR. Residues 481 to 495 are compositionally biased toward basic residues; it reads MRKRKKETARQRQRR. Positions 596–768 constitute a tr-type G domain; that stretch reads RRPPVVTVMG…LLLVTEVEDL (173 aa). A G1 region spans residues 605–612; the sequence is GHVDHGKT. 605-612 lines the GTP pocket; it reads GHVDHGKT. The segment at 630-634 is G2; it reads GITQH. The tract at residues 655–658 is G3; it reads DTPG. GTP-binding positions include 655–659 and 709–712; these read DTPGH and NKID. The segment at 709–712 is G4; it reads NKID. The tract at residues 745 to 747 is G5; the sequence is SAI.

This sequence belongs to the TRAFAC class translation factor GTPase superfamily. Classic translation factor GTPase family. IF-2 subfamily.

It localises to the cytoplasm. One of the essential components for the initiation of protein synthesis. Protects formylmethionyl-tRNA from spontaneous hydrolysis and promotes its binding to the 30S ribosomal subunits. Also involved in the hydrolysis of GTP during the formation of the 70S ribosomal complex. The polypeptide is Translation initiation factor IF-2 (Synechococcus sp. (strain CC9605)).